Reading from the N-terminus, the 367-residue chain is Homoserine O-acetyltransferase (367 aa).

Positions 41 to 339 constitute an AB hydrolase-1 domain; it reads NLIVLEHALT…PVGHDAFLTE (299 aa). Serine 136 acts as the Nucleophile in catalysis. Arginine 205 provides a ligand contact to substrate. Catalysis depends on residues aspartate 303 and histidine 333. Aspartate 334 provides a ligand contact to substrate.

The protein belongs to the AB hydrolase superfamily. MetX family. As to quaternary structure, homodimer.

The protein resides in the cytoplasm. It carries out the reaction L-homoserine + acetyl-CoA = O-acetyl-L-homoserine + CoA. It functions in the pathway amino-acid biosynthesis; L-methionine biosynthesis via de novo pathway; O-acetyl-L-homoserine from L-homoserine: step 1/1. Its function is as follows. Transfers an acetyl group from acetyl-CoA to L-homoserine, forming acetyl-L-homoserine. The polypeptide is Homoserine O-acetyltransferase (Corynebacterium diphtheriae (strain ATCC 700971 / NCTC 13129 / Biotype gravis)).